A 511-amino-acid chain; its full sequence is MSLRISKDVSVSVNTADLLPEDDGFDRVDGDNRGWFSVFLGLFNTHPSDWNIALNEAIETIDWDSKSITLAQPLGNFFTFAFYVVRLLQLSLIKPNLSRINEKTDHFDLSKSEMLKKYEYLYHFTNDKNQSVGNVYYRFLGRLGKFFDICIVLLTFTNGFITYKFFWGNFKMYCLFYLKKGPHLRNVTKASLQKLGQDDDDGSLWSSLRYFWNGTKDKEGSTDDRDDDDGDIHYKLFKWTPSQFITMLFVSFAPTAVVFLLFTEVSFLTLIAVIVHQWVLHRLVIDCYGNRLVHESVIASANLAEVEAKFVKPRMSKKVQDVAIDCTPHGDGMVKFYPALTTNRSHIFQTHSLTGELITETFNPSTKEFEDLQTEGTTHNVIRTAPYAAGDLLHRDPYWYQRNMIMRDVAHRPYFHSREVSPTRYHPSRISPRPGQYSPLVSSTSGMSTPLMRPDRSPFLNTRPSLGEREELFHRGNSRSPLRQPIENFKSLDRSSDSQSPIRRHNGDSDA.

The next 2 membrane-spanning stretches (helical) occupy residues 146-166 (FFDI…YKFF) and 255-275 (TAVV…AVIV). A disordered region spans residues 420-511 (VSPTRYHPSR…IRRHNGDSDA (92 aa)). The segment covering 439–448 (PLVSSTSGMS) has biased composition (polar residues).

Belongs to the NUR1 family.

The protein localises to the nucleus membrane. Its function is as follows. Member of a perinuclear network that controls recombination at multiple loci to maintain genome stability. Required for rDNA repeat stability. This is Nuclear rim protein 1 (NUR1) from Zygosaccharomyces rouxii (strain ATCC 2623 / CBS 732 / NBRC 1130 / NCYC 568 / NRRL Y-229).